The primary structure comprises 337 residues: Eukaryotic translation initiation factor 3 subunit H (337 aa).

In terms of domain architecture, MPN spans 21 to 153; sequence VQCDGLAVMK…LKAYRLTPQA (133 aa).

The protein belongs to the eIF-3 subunit H family. Component of the eukaryotic translation initiation factor 3 (eIF-3) complex. The eIF-3 complex interacts with pix. Interacts with mxt.

The protein resides in the cytoplasm. Its function is as follows. Component of the eukaryotic translation initiation factor 3 (eIF-3) complex, which is involved in protein synthesis of a specialized repertoire of mRNAs and, together with other initiation factors, stimulates binding of mRNA and methionyl-tRNAi to the 40S ribosome. The eIF-3 complex specifically targets and initiates translation of a subset of mRNAs involved in cell proliferation. This Drosophila grimshawi (Hawaiian fruit fly) protein is Eukaryotic translation initiation factor 3 subunit H.